Here is a 699-residue protein sequence, read N- to C-terminus: tRNA(Met) cytidine acetyltransferase TmcA (699 aa).

Residues Gln178, 200-209 (GRGKSTLAGM), and Arg322 contribute to the ATP site. Residues 408–547 (MHIASAQVAG…SGCYSAMAIL (140 aa)) form the N-acetyltransferase domain. Acetyl-CoA-binding positions include 475–477 (IAV) and 482–488 (RRQGIGR).

This sequence belongs to the RNA cytidine acetyltransferase family. TmcA subfamily.

It is found in the cytoplasm. It carries out the reaction cytidine(34) in elongator tRNA(Met) + acetyl-CoA + ATP + H2O = N(4)-acetylcytidine(34) in elongator tRNA(Met) + ADP + phosphate + CoA + H(+). Catalyzes the formation of N(4)-acetylcytidine (ac(4)C) at the wobble position of tRNA(Met), by using acetyl-CoA as an acetyl donor and ATP (or GTP). This is tRNA(Met) cytidine acetyltransferase TmcA from Pectobacterium atrosepticum (strain SCRI 1043 / ATCC BAA-672) (Erwinia carotovora subsp. atroseptica).